Consider the following 293-residue polypeptide: Ribosomal RNA small subunit methyltransferase H (293 aa).

Residues 34 to 36 (GGH), Asp-54, Leu-86, Asp-101, and Gln-108 each bind S-adenosyl-L-methionine.

This sequence belongs to the methyltransferase superfamily. RsmH family.

It localises to the cytoplasm. The enzyme catalyses cytidine(1402) in 16S rRNA + S-adenosyl-L-methionine = N(4)-methylcytidine(1402) in 16S rRNA + S-adenosyl-L-homocysteine + H(+). In terms of biological role, specifically methylates the N4 position of cytidine in position 1402 (C1402) of 16S rRNA. The sequence is that of Ribosomal RNA small subunit methyltransferase H from Elusimicrobium minutum (strain Pei191).